The following is a 446-amino-acid chain: Alpha-galacturonidase (446 aa).

Residue 10–72 participates in NAD(+) binding; sequence IKIAYIGGGS…GRWRYEAVST (63 aa). N151 serves as a coordination point for substrate. Residue C173 participates in Mn(2+) binding. The active-site Proton donor is H174. Residue H210 coordinates Mn(2+).

It belongs to the glycosyl hydrolase 4 family. In terms of assembly, homotetramer. It depends on NAD(+) as a cofactor. Mn(2+) is required as a cofactor.

It carries out the reaction [(1-&gt;4)-alpha-D-galacturonosyl](n) + H2O = alpha-D-galacturonate + [(1-&gt;4)-alpha-D-galacturonosyl](n-1). In terms of biological role, alpha-galacturonidase able to catalyze the hydrolysis of the chromogenic substrate p-nitrophenyl-alpha-D-galacturonic acid (pNPalphaGalUA), and of the probable natural substrate alpha-1,4-di-galacturonate (GalUA(2)). Can neither hydrolyze pNPbetaGalUA, nor the stereoisomeric pNPalphaGlcUA. Does not display alpha- or beta-glucosidase activity as it fails to hydrolyze melibiose, raffinose, lactose and the chromogenic analogs, pNPalphaGal and pNPbetaGal. Cannot use the following compounds as substrates: pNP-N-acetyl-alpha- and beta-D-galactosaminide, pNP-N-acetyl-alpha- and beta-D-glucosaminide, pNP-alpha-L- and beta-L-arabinopyranoside, pNP-alpha- and beta-D-glucuronide, pNP-alpha- and beta-D-glucopyranoside, pNP-alpha- and beta-D-glucopyranoside 6-phosphate, pNP-alpha-D-galactopyranoside 6-phosphate and oNP-beta-D-galactopyranoside 6-phosphate. The protein is Alpha-galacturonidase (lplD) of Bacillus subtilis (strain 168).